We begin with the raw amino-acid sequence, 147 residues long: uncharacterized protein (147 aa).

The chain crosses the membrane as a helical span at residues 3–23; that stretch reads APMIGMVVLVVVLGLAVLALS.

The protein to M.leprae ML1147.

Its subcellular location is the membrane. This is an uncharacterized protein from Mycobacterium tuberculosis (strain CDC 1551 / Oshkosh).